Consider the following 236-residue polypeptide: Orotidine 5'-phosphate decarboxylase (236 aa).

Substrate contacts are provided by residues Asp-17, Lys-39, 66 to 75, Thr-125, Arg-186, Gln-195, Gly-215, and Arg-216; that span reads DLKFHDIPNT. Residue Lys-68 is the Proton donor of the active site.

The protein belongs to the OMP decarboxylase family. Type 1 subfamily. As to quaternary structure, homodimer.

It carries out the reaction orotidine 5'-phosphate + H(+) = UMP + CO2. The protein operates within pyrimidine metabolism; UMP biosynthesis via de novo pathway; UMP from orotate: step 2/2. Functionally, catalyzes the decarboxylation of orotidine 5'-monophosphate (OMP) to uridine 5'-monophosphate (UMP). This chain is Orotidine 5'-phosphate decarboxylase, found in Buchnera aphidicola subsp. Schizaphis graminum (strain Sg).